The following is a 146-amino-acid chain: 3-hydroxyacyl-[acyl-carrier-protein] dehydratase FabZ (146 aa).

Residue H49 is part of the active site.

Belongs to the thioester dehydratase family. FabZ subfamily.

It localises to the cytoplasm. It catalyses the reaction a (3R)-hydroxyacyl-[ACP] = a (2E)-enoyl-[ACP] + H2O. Its function is as follows. Involved in unsaturated fatty acids biosynthesis. Catalyzes the dehydration of short chain beta-hydroxyacyl-ACPs and long chain saturated and unsaturated beta-hydroxyacyl-ACPs. This chain is 3-hydroxyacyl-[acyl-carrier-protein] dehydratase FabZ, found in Pseudomonas syringae pv. tomato (strain ATCC BAA-871 / DC3000).